The chain runs to 250 residues: Ubiquinone/menaquinone biosynthesis C-methyltransferase UbiE (250 aa).

Residues Thr-74, Asp-94, 122-123 (DA), and Ser-139 contribute to the S-adenosyl-L-methionine site.

The protein belongs to the class I-like SAM-binding methyltransferase superfamily. MenG/UbiE family.

It catalyses the reaction a 2-demethylmenaquinol + S-adenosyl-L-methionine = a menaquinol + S-adenosyl-L-homocysteine + H(+). It carries out the reaction a 2-methoxy-6-(all-trans-polyprenyl)benzene-1,4-diol + S-adenosyl-L-methionine = a 5-methoxy-2-methyl-3-(all-trans-polyprenyl)benzene-1,4-diol + S-adenosyl-L-homocysteine + H(+). Its pathway is quinol/quinone metabolism; menaquinone biosynthesis; menaquinol from 1,4-dihydroxy-2-naphthoate: step 2/2. It functions in the pathway cofactor biosynthesis; ubiquinone biosynthesis. Its function is as follows. Methyltransferase required for the conversion of demethylmenaquinol (DMKH2) to menaquinol (MKH2) and the conversion of 2-polyprenyl-6-methoxy-1,4-benzoquinol (DDMQH2) to 2-polyprenyl-3-methyl-6-methoxy-1,4-benzoquinol (DMQH2). This chain is Ubiquinone/menaquinone biosynthesis C-methyltransferase UbiE, found in Cereibacter sphaeroides (strain ATCC 17029 / ATH 2.4.9) (Rhodobacter sphaeroides).